A 357-amino-acid polypeptide reads, in one-letter code: Homoserine O-succinyltransferase (357 aa).

Residue C146 is the Acyl-thioester intermediate of the active site. Substrate contacts are provided by K167 and S196. H239 serves as the catalytic Proton acceptor. Residue E241 is part of the active site. Substrate is bound at residue R253.

Belongs to the MetA family.

The protein resides in the cytoplasm. It catalyses the reaction L-homoserine + succinyl-CoA = O-succinyl-L-homoserine + CoA. Its pathway is amino-acid biosynthesis; L-methionine biosynthesis via de novo pathway; O-succinyl-L-homoserine from L-homoserine: step 1/1. In terms of biological role, transfers a succinyl group from succinyl-CoA to L-homoserine, forming succinyl-L-homoserine. The polypeptide is Homoserine O-succinyltransferase (Allochromatium vinosum (strain ATCC 17899 / DSM 180 / NBRC 103801 / NCIMB 10441 / D) (Chromatium vinosum)).